A 231-amino-acid polypeptide reads, in one-letter code: Protein OPG061 (231 aa).

Belongs to the orthopoxvirus OPG058 family.

The protein resides in the host nucleus. Its subcellular location is the host nucleolus. The chain is Protein OPG061 (OPG061) from Cynomys gunnisoni (Gunnison's prairie dog).